A 1066-amino-acid polypeptide reads, in one-letter code: Coiled-coil domain-containing protein 73 (1066 aa).

2 coiled-coil regions span residues 47-134 and 178-391; these read KAET…QVSQ and LVRE…KTEE. Disordered regions lie at residues 568-600, 719-811, 854-883, 944-978, and 1003-1027; these read LDTR…SNPF, SENS…PKSG, LSPA…PEKT, KNIE…EERN, and VQQS…PGNN. Polar residues-rich tracts occupy residues 591–600, 742–781, 789–811, 857–869, and 948–964; these read NTDGSESNPF, RTNT…TSQA, PLTT…PKSG, ATPS…TSAR, and SDPT…SNWS. A compositionally biased stretch (basic and acidic residues) spans 967 to 978; it reads LDPKGQPREERN. Residues 1003–1013 show a composition bias toward polar residues; the sequence is VQQSHSQTVKV.

This is Coiled-coil domain-containing protein 73 (Ccdc73) from Mus musculus (Mouse).